A 209-amino-acid polypeptide reads, in one-letter code: NAD(P)H-quinone oxidoreductase subunit I (209 aa).

2 4Fe-4S ferredoxin-type domains span residues 55 to 84 and 95 to 124; these read GRIH…VDWE and KHYS…MTEE. Cys-64, Cys-67, Cys-70, Cys-74, Cys-104, Cys-107, Cys-110, and Cys-114 together coordinate [4Fe-4S] cluster.

Belongs to the complex I 23 kDa subunit family. In terms of assembly, NDH-1 is composed of at least 11 different subunits. Requires [4Fe-4S] cluster as cofactor.

The protein resides in the cellular thylakoid membrane. It carries out the reaction a plastoquinone + NADH + (n+1) H(+)(in) = a plastoquinol + NAD(+) + n H(+)(out). It catalyses the reaction a plastoquinone + NADPH + (n+1) H(+)(in) = a plastoquinol + NADP(+) + n H(+)(out). In terms of biological role, NDH-1 shuttles electrons from an unknown electron donor, via FMN and iron-sulfur (Fe-S) centers, to quinones in the respiratory and/or the photosynthetic chain. The immediate electron acceptor for the enzyme in this species is believed to be plastoquinone. Couples the redox reaction to proton translocation, and thus conserves the redox energy in a proton gradient. This is NAD(P)H-quinone oxidoreductase subunit I from Trichodesmium erythraeum (strain IMS101).